A 466-amino-acid chain; its full sequence is Cysteine--tRNA ligase (466 aa).

Cysteine 29 contributes to the Zn(2+) binding site. Residues 31 to 41 (PTVYNYIHIGN) carry the 'HIGH' region motif. Zn(2+)-binding residues include cysteine 209, histidine 234, and glutamate 238. The 'KMSKS' region motif lies at 266 to 270 (KMSKS). Position 269 (lysine 269) interacts with ATP. Position 270 is a phosphoserine (serine 270).

The protein belongs to the class-I aminoacyl-tRNA synthetase family. Monomer. Zn(2+) serves as cofactor.

Its subcellular location is the cytoplasm. The enzyme catalyses tRNA(Cys) + L-cysteine + ATP = L-cysteinyl-tRNA(Cys) + AMP + diphosphate. The polypeptide is Cysteine--tRNA ligase (Bacillus pumilus (strain SAFR-032)).